The following is a 331-amino-acid chain: Cytoskeleton protein RodZ (331 aa).

At 1–111 (MNTEATQDHQ…LGKRRKKRDG (111 aa)) the chain is on the cytoplasmic side. The region spanning 19–71 (LRHAREQLGLSQQAVAERLCLKVSTVRDIEDDKAPADLASTFLRGYIRSYARL) is the HTH cro/C1-type domain. Positions 30-49 (QQAVAERLCLKVSTVRDIED) form a DNA-binding region, H-T-H motif. The chain crosses the membrane as a helical; Signal-anchor for type II membrane protein span at residues 112–132 (WLMSFTWLVLFVVIGLSGAWW). The Periplasmic segment spans residues 133–331 (WQDHKAQQEE…TLNAESSPAQ (199 aa)). The segment covering 146–166 (MADQSSAELNGGDANSQNVPL) has biased composition (polar residues). The interval 146-238 (MADQSSAELN…ASPLPTDQAN (93 aa)) is disordered. Composition is skewed to low complexity over residues 167-202 (DTSAPAAPTADSAANSAPTDTASAPTTSAPAQTPAD) and 216-234 (TAGTTPAAPATTPASPLPT).

It belongs to the RodZ family.

The protein resides in the cell inner membrane. Cytoskeletal protein that is involved in cell-shape control through regulation of the length of the long axis. The chain is Cytoskeleton protein RodZ from Klebsiella pneumoniae subsp. pneumoniae (strain ATCC 700721 / MGH 78578).